The sequence spans 167 residues: Cell division protein SepF (167 aa).

Residues 25-64 (EEDVAPVNNSTFQEKKHKKRSAVQRKQKNSDQEGDSVVPL) form a disordered region. Positions 39–51 (KKHKKRSAVQRKQ) are enriched in basic residues.

This sequence belongs to the SepF family. As to quaternary structure, homodimer. Interacts with FtsZ.

It localises to the cytoplasm. Functionally, cell division protein that is part of the divisome complex and is recruited early to the Z-ring. Probably stimulates Z-ring formation, perhaps through the cross-linking of FtsZ protofilaments. Its function overlaps with FtsA. This Natranaerobius thermophilus (strain ATCC BAA-1301 / DSM 18059 / JW/NM-WN-LF) protein is Cell division protein SepF.